We begin with the raw amino-acid sequence, 189 residues long: Glycerol-3-phosphate acyltransferase (189 aa).

A run of 5 helical transmembrane segments spans residues 1–21, 50–70, 77–97, 111–131, and 151–171; these read MFWL…AIVL, KLAI…VLLA, LHAQ…PLYF, MLMA…LLTF, and LLAW…VMIV.

This sequence belongs to the PlsY family. Probably interacts with PlsX.

It localises to the cell inner membrane. It catalyses the reaction an acyl phosphate + sn-glycerol 3-phosphate = a 1-acyl-sn-glycero-3-phosphate + phosphate. Its pathway is lipid metabolism; phospholipid metabolism. Catalyzes the transfer of an acyl group from acyl-phosphate (acyl-PO(4)) to glycerol-3-phosphate (G3P) to form lysophosphatidic acid (LPA). This enzyme utilizes acyl-phosphate as fatty acyl donor, but not acyl-CoA or acyl-ACP. The chain is Glycerol-3-phosphate acyltransferase from Pseudomonas putida (strain ATCC 47054 / DSM 6125 / CFBP 8728 / NCIMB 11950 / KT2440).